A 486-amino-acid polypeptide reads, in one-letter code: Na(+)/H(+) antiporter NhaA 2 (486 aa).

A run of 11 helical transmembrane segments spans residues 58–78, 102–122, 138–158, 168–188, 198–218, 220–240, 260–280, 300–320, 338–358, 374–394, and 404–424; these read GGLL…TAPG, LTDW…GLEL, ALPV…CLAL, AWAI…SLAG, VLLG…ALGL, HGIN…TALA, ISLH…GLLV, LGPI…TGVS, VAVG…WLAV, LVPL…ITRL, and GAST…LTAL. Residues 432-486 form a disordered region; the sequence is GAPATRGSSRPATQVGGVAGPIPQTRRESDGGPTGGQEPPPARVRRAPPASPHPR.

This sequence belongs to the NhaA Na(+)/H(+) (TC 2.A.33) antiporter family.

The protein localises to the cell membrane. It catalyses the reaction Na(+)(in) + 2 H(+)(out) = Na(+)(out) + 2 H(+)(in). Na(+)/H(+) antiporter that extrudes sodium in exchange for external protons. The protein is Na(+)/H(+) antiporter NhaA 2 of Frankia alni (strain DSM 45986 / CECT 9034 / ACN14a).